Here is a 293-residue protein sequence, read N- to C-terminus: Homoserine kinase (293 aa).

Residue 83-93 (PITRGMGSSSA) coordinates ATP.

It belongs to the GHMP kinase family. Homoserine kinase subfamily.

Its subcellular location is the cytoplasm. It catalyses the reaction L-homoserine + ATP = O-phospho-L-homoserine + ADP + H(+). The protein operates within amino-acid biosynthesis; L-threonine biosynthesis; L-threonine from L-aspartate: step 4/5. Functionally, catalyzes the ATP-dependent phosphorylation of L-homoserine to L-homoserine phosphate. The protein is Homoserine kinase of Helicobacter pylori (strain J99 / ATCC 700824) (Campylobacter pylori J99).